The chain runs to 92 residues: Probable Fe(2+)-trafficking protein (92 aa).

This sequence belongs to the Fe(2+)-trafficking protein family.

Could be a mediator in iron transactions between iron acquisition and iron-requiring processes, such as synthesis and/or repair of Fe-S clusters in biosynthetic enzymes. This chain is Probable Fe(2+)-trafficking protein, found in Shewanella sp. (strain ANA-3).